The sequence spans 255 residues: GTP cyclohydrolase FolE2 (255 aa).

This sequence belongs to the GTP cyclohydrolase IV family.

It carries out the reaction GTP + H2O = 7,8-dihydroneopterin 3'-triphosphate + formate + H(+). It participates in cofactor biosynthesis; 7,8-dihydroneopterin triphosphate biosynthesis; 7,8-dihydroneopterin triphosphate from GTP: step 1/1. In terms of biological role, converts GTP to 7,8-dihydroneopterin triphosphate. The sequence is that of GTP cyclohydrolase FolE2 from Syntrophus aciditrophicus (strain SB).